The primary structure comprises 528 residues: U6 snRNA (guanine-N(2))-methyltransferase THUMPD2 (528 aa).

A compositionally biased stretch (basic and acidic residues) spans 154-168 (QEVAKDHGESQEDKL). Disordered stretches follow at residues 154–200 (QEVA…ADAQ) and 437–460 (MKTL…RASS). Residues 162 to 266 (ESQEDKLLQG…DAYSVVGIPL (105 aa)) enclose the THUMP domain.

The protein belongs to the methyltransferase superfamily. As to quaternary structure, part of the heterodimeric THUMPD2-TRM112 methyltransferase complex; this complex forms an active tRNA methyltransferase, where TRMT112 acts as an activator of the catalytic subunit THUMPD2.

It localises to the nucleus. It carries out the reaction guanosine in U6 snRNA + S-adenosyl-L-methionine = N(2)-methylguanosine in U6 snRNA + S-adenosyl-L-homocysteine + H(+). Its function is as follows. Catalytic subunit of the THUMPD2-TRM112 methyltransferase complex, that specifically mediates the S-adenosyl-L-methionine-dependent N(2)-methylation of guanosine nucleotides, most probably at position 72 (m2G72), in the U6snRNA of the major spliceosome. This modification in the U6 snRNA affects the constitutive splicing efficiency of introns that have suboptimal splice sites and can impact final mRNA levels. The polypeptide is U6 snRNA (guanine-N(2))-methyltransferase THUMPD2 (Mus musculus (Mouse)).